Consider the following 1475-residue polypeptide: Peroxidasin homolog (1475 aa).

An N-terminal signal peptide occupies residues 1 to 23 (MAVRPTRRCLLALLLCFAWWAMA). The region spanning 24–60 (VVASKQGAGCPSRCLCFRTTVRCMHLLLEAVPAVAPQ) is the LRRNT domain. Disulfide bonds link Cys-33/Cys-39 and Cys-37/Cys-46. LRR repeat units lie at residues 58-81 (APQT…AFRR), 82-105 (LRSL…AFED), 107-129 (ENLK…AFKG), 130-153 (LASL…SFQH), 154-177 (LPKL…TFSQ), and 179-201 (ESMK…LWLA). The LRRCT domain maps to 189 to 241 (NALHCDCEILWLADLLKTYAQSGNAQAAATCEYPRRIQGRSVATITPEELNCE). 6 disulfide bridges follow: Cys-193/Cys-240, Cys-195/Cys-219, Cys-264/Cys-314, Cys-360/Cys-409, Cys-451/Cys-499, and Cys-543/Cys-591. Ig-like C2-type domains are found at residues 243 to 329 (PRIT…QEVT), 339 to 425 (PTFV…AFII), 430 to 517 (PQFT…LTVQ), and 518 to 607 (PRVT…MVLS). Asn-387 carries an N-linked (GlcNAc...) asparagine glycan. One copy of the LRR 7 repeat lies at 402-425 (SDSGEYTCFASNSVDSIHATAFII). 4 N-linked (GlcNAc...) asparagine glycosylation sites follow: Asn-637, Asn-696, Asn-716, and Asn-728. Cystine bridges form between Cys-720–Cys-882, Cys-729–Cys-745, Cys-844–Cys-854, and Cys-848–Cys-872. Heme b is bound at residue Asp-823. Residue His-824 is the Proton acceptor of the active site. Residue Asp-825 participates in Ca(2+) binding. Residues Thr-904, Tyr-906, Asp-908, and Ser-910 each contribute to the Ca(2+) site. Cys-956 and Cys-967 are oxidised to a cystine. The N-linked (GlcNAc...) asparagine glycan is linked to Asn-961. The heme b site is built by Glu-977 and His-1071. The stretch at 1148–1172 (ALDLAAINIQRGRDHGIPPYHDYRV) is one LRR 8 repeat. The residue at position 1173 (Tyr-1173) is a Phosphotyrosine. 2 disulfide bridges follow: Cys-1174/Cys-1231 and Cys-1272/Cys-1298. Residue Asn-1175 is glycosylated (N-linked (GlcNAc...) asparagine). Ser-1177 bears the Phosphoserine mark. One copy of the LRR 9 repeat lies at 1267-1288 (LARILCDNSDNITRVQQDVFRV). Asn-1277 and Asn-1364 each carry an N-linked (GlcNAc...) asparagine glycan. A required in homotrimerization region spans residues 1312–1407 (CCEDCRTRGQ…QINSLESRLS (96 aa)). The VWFC domain maps to 1409-1467 (TECVDDSGESHGGNTKWKKDPCTVCECKNGQITCFVEACQPAACPQPVKVEGACCPVCL).

The protein belongs to the peroxidase family. XPO subfamily. As to quaternary structure, homotrimer; disulfide-linked. The homotrimer form is predominant. Homooligomer; disulfide-linked. Oligomerization occurs intracellularly before C-terminal proteolytic cleavage. Interacts with PXDNL; this interaction inhibits the peroxidase activity of PXDN. Ca(2+) serves as cofactor. The cofactor is heme b. Processed by FURIN and the proteolytic processing largely depends on the peroxidase activity of PXDN. The proteolytic cleavage occurs after intracellular homotrimerization and releases into the extracellular matrix a large, catalytically active fragment and a smaller fragment consisting primarily of the C-terminal VWFC domain. The processing enhances both peroxidase activity and sulfilimine cross-links formation. In terms of tissue distribution, highly expressed in the cardiovascular system. In the embryo, expressed in the corneal epithelial layer. In the adult eyes, expressed in the corneal and lens epithelium. Expressed in lung.

It is found in the secreted. The protein localises to the extracellular space. The protein resides in the extracellular matrix. It localises to the endoplasmic reticulum. Its subcellular location is the cell surface. It is found in the basement membrane. The enzyme catalyses L-lysyl-[collagen] + L-methionyl-[collagen] + H2O2 = [collagen]-L-lysyl-N-S-L-methionyl-[collagen] + 2 H2O + H(+). It catalyses the reaction bromide + H2O2 = hypobromite + H2O. It carries out the reaction L-lysyl-[collagen] + L-methionyl-[collagen] + hypobromite = [collagen]-L-lysyl-N-S-L-methionyl-[collagen] + bromide + H2O + H(+). The catalysed reaction is (5R)-5-hydroxy-L-lysyl-[collagen] + L-methionyl-[collagen] + hypobromite = [collagen]-(5R)-5-hydroxy-L-lysyl-N-S-L-methionyl-[collagen] + bromide + H2O + H(+). The enzyme catalyses (5R)-5-hydroxy-L-lysyl-[collagen] + L-methionyl-[collagen] + H2O2 = [collagen]-(5R)-5-hydroxy-L-lysyl-N-S-L-methionyl-[collagen] + 2 H2O + H(+). It catalyses the reaction L-tyrosyl-[protein] + bromide + H2O2 + H(+) = 3-bromo-L-tyrosyl-[protein] + 2 H2O. It carries out the reaction hypobromite + L-tyrosyl-[protein] + H(+) = 3-bromo-L-tyrosyl-[protein] + H2O. With respect to regulation, thiocyanate inhibits the formation of 3-bromotyrosine. Functionally, catalyzes the two-electron oxidation of bromide by hydrogen peroxide and generates hypobromite as a reactive intermediate which mediates the formation of sulfilimine cross-links between methionine and hydroxylysine residues within an uncross-linked collagen IV/COL4A1 NC1 hexamer. In turns, directly contributes to the collagen IV network-dependent fibronectin/FN and laminin assembly, which is required for full extracellular matrix (ECM)-mediated signaling. Thus, sulfilimine cross-links are essential for growth factor-induced cell proliferation and survival in endothelial cells, an event essential to basement membrane integrity. In addition, through the bromide oxidation, may promote tubulogenesis and induce angiogenesis through ERK1/2, Akt, and FAK pathways. Moreover brominates alpha2 collagen IV chain/COL4A2 at 'Tyr-1480' and leads to bromine enrichment of the basement membranes. In vitro, can also catalyze the two-electron oxidation of thiocyanate and iodide and these two substrates could effectively compete with bromide and thus inhibit the formation of sulfilimine bonds. Binds laminins. May play a role in the organization of eyeball structure and lens development during eye development. In Mus musculus (Mouse), this protein is Peroxidasin homolog.